A 916-amino-acid polypeptide reads, in one-letter code: Oxoglutarate dehydrogenase (916 aa).

This sequence belongs to the alpha-ketoglutarate dehydrogenase family. Homodimer. Part of the 2-oxoglutarate dehydrogenase (OGDH) complex composed of E1 (2-oxoglutarate dehydrogenase), E2 (dihydrolipoamide succinyltransferase) and E3 (dihydrolipoamide dehydrogenase); the complex contains multiple copies of the three enzymatic components (E1, E2 and E3). It depends on thiamine diphosphate as a cofactor.

It catalyses the reaction N(6)-[(R)-lipoyl]-L-lysyl-[protein] + 2-oxoglutarate + H(+) = N(6)-[(R)-S(8)-succinyldihydrolipoyl]-L-lysyl-[protein] + CO2. In terms of biological role, E1 component of the 2-oxoglutarate dehydrogenase (OGDH) complex which catalyzes the decarboxylation of 2-oxoglutarate, the first step in the conversion of 2-oxoglutarate to succinyl-CoA and CO(2). This Buchnera aphidicola subsp. Baizongia pistaciae (strain Bp) protein is Oxoglutarate dehydrogenase (sucA).